Reading from the N-terminus, the 285-residue chain is MSIAGLVTTLPWLMNMLRAVPGATGRFERFAGWCYEQLLLKRESLAVERATNHNHEPRDVMTWLINSMDEGDRCAPPTESALQEDARTLISAGSDTVAITFTNILYFLVKHPTIYQKLQRLMDHEFPQGYSSWTYNKAKGVPYIDYIIHETLRLRPAVPMGFLRQTPPQGLQIDEIFIPGDVIVNVPTYTIHRDSRYFYDAAKFIPERWEELSPDTAAYLAFQRGPFTCSGKNLATMQLRMLISCLALRYRIHFAPGEDGVAFATQEKETLTMWIPPLQMVFRPR.

Residues 1-19 form the signal peptide; it reads MSIAGLVTTLPWLMNMLRA. Cysteine 229 lines the heme pocket.

Belongs to the cytochrome P450 family. The cofactor is heme.

It participates in secondary metabolite biosynthesis; terpenoid biosynthesis. Cytochrome P450 monooxygenase; part of the gene cluster that mediates the biosynthesis of eupenifeldin, a bistropolone meroterpenoid that acts as an antitumor agent. The first step of eupenifeldin biosynthesis is the biosynthesis of 3-methylorcinaldehyde performed by the non-reducing polyketide synthase eupA. Oxidative dearomatization of 3-methylorcinaldehyde likely catalyzed by the FAD-dependent monooxygenase eupB is followed by oxidative ring expansion by the 2-oxoglutarate-dependent dioxygenase eupC to provide the first tropolone metabolite, tropolone stipitaldehyde. In parallel, generation of sesquiterpene alpha-humulene from farnesylpyrophosphate (FPP) is catalyzed by the terpene cyclase eupE. The cytochrome P450 monooxygenase eupD then hydroxylates humulene to humulenol. The putative Diels-Alderase eupF probably catalyzes the formation of the tropolone-humulene skeleton by linking humulenol and the polyketide moiety. The short-chain dehydrogenase/reductase eupG and the flavin-dependent monooxygenase eupH are also essential for eupenifeldin biosynthesis and are likely the additional decorating enzymes of the tropolone-humulene skeleton to produce final eupenifeldin or derivatives. This Phoma sp protein is Cytochrome P450 monooxygenase eupD.